Reading from the N-terminus, the 287-residue chain is Elongation factor Ts (287 aa).

The segment at 80–83 (TDFL) is involved in Mg(2+) ion dislocation from EF-Tu.

The protein belongs to the EF-Ts family.

It localises to the cytoplasm. Its function is as follows. Associates with the EF-Tu.GDP complex and induces the exchange of GDP to GTP. It remains bound to the aminoacyl-tRNA.EF-Tu.GTP complex up to the GTP hydrolysis stage on the ribosome. This Pseudomonas putida (strain GB-1) protein is Elongation factor Ts.